A 360-amino-acid chain; its full sequence is Putative agmatine deiminase (360 aa).

Cys353 serves as the catalytic Amidino-cysteine intermediate.

This sequence belongs to the agmatine deiminase family.

The enzyme catalyses agmatine + H2O = N-carbamoylputrescine + NH4(+). In Vibrio parahaemolyticus serotype O3:K6 (strain RIMD 2210633), this protein is Putative agmatine deiminase.